We begin with the raw amino-acid sequence, 161 residues long: Copper transporter 1 (161 aa).

2 helical membrane passes run 55–75 and 109–129; these read GGMY…VEFL and VAYL…LVAV.

This sequence belongs to the copper transporter (Ctr) (TC 1.A.56) family. SLC31A subfamily. In terms of assembly, self-interacts. Interacts with SWEET11 and COPT2.

It is found in the cell membrane. Functionally, involved in the transport of copper, in cooperation with SWEET11 and COPT2. Contributes to the removal of copper (Cu) from xylem, and thus to the sensitivity toward bacterial pathogens such as X.oryzae pv. oryzae (Xoo). This is Copper transporter 1 (COPT1) from Oryza sativa subsp. japonica (Rice).